The following is a 34-amino-acid chain: Delta-conotoxin AtVIA (34 aa).

The propeptide occupies Leu1 to Lys4. Gln5 is subject to Pyrrolidone carboxylic acid. 3 cysteine pairs are disulfide-bonded: Cys6/Cys23, Cys13/Cys27, and Cys22/Cys31.

As to expression, expressed by the venom duct.

It is found in the secreted. In terms of biological role, probable toxin from a worm-hunter cone snail. Shows an excitatory activity on a majority of mouse lumbar dorsal root ganglion (DRG) neurons. Very probably inhibits the inactivation of voltage-gated sodium channels (Nav). The chain is Delta-conotoxin AtVIA from Conus ateralbus (Cone snail).